A 285-amino-acid polypeptide reads, in one-letter code: Nucleotide-binding protein HI_1146 (285 aa).

8–15 (GRSGAGKS) lines the ATP pocket. 56–59 (DIRN) contacts GTP.

Belongs to the RapZ-like family.

Functionally, displays ATPase and GTPase activities. This Haemophilus influenzae (strain ATCC 51907 / DSM 11121 / KW20 / Rd) protein is Nucleotide-binding protein HI_1146.